A 693-amino-acid polypeptide reads, in one-letter code: A disintegrin and metalloproteinase with thrombospondin motifs like (693 aa).

Positions 1–24 (MESSVATHWLSAFVILCSFITTQS) are cleaved as a signal peptide. Positions 67 to 80 (IPTSHPANSNSADS) are enriched in polar residues. Residues 67–91 (IPTSHPANSNSADSGKTPHLKTEKV) are disordered. Asparagine 124 and asparagine 194 each carry an N-linked (GlcNAc...) asparagine glycan. In terms of domain architecture, Peptidase M12B spans 353-585 (IYPEILVIVD…DTATCLYNSP (233 aa)). 2 cysteine pairs are disulfide-bonded: cysteine 485-cysteine 580 and cysteine 541-cysteine 564. Residue histidine 514 coordinates Zn(2+). Positions 514 to 525 (HEVGHLLGAVHD) match the Metal-binding motif. Glutamate 515 is an active-site residue. Zn(2+)-binding residues include histidine 518 and histidine 524. The N-linked (GlcNAc...) asparagine glycan is linked to asparagine 687.

Requires Zn(2+) as cofactor.

The protein localises to the secreted. Its subcellular location is the extracellular space. The protein resides in the extracellular matrix. Its function is as follows. Involved in larval molting and metamorphosis. May degrade extracellular matrix (ECM) and basement membrane (BM) during the development of organs to allow degeneration and remodeling of tissues. This is A disintegrin and metalloproteinase with thrombospondin motifs like from Bombyx mori (Silk moth).